Reading from the N-terminus, the 330-residue chain is LIM domain-containing protein pin-2 (330 aa).

5 consecutive LIM zinc-binding domains span residues 21 to 73, 82 to 132, 144 to 194, 202 to 255, and 264 to 315; these read CERC…CEHD, CAKC…CFLC, CNKC…CPRC, CFDC…CRDD, and CFIC…CKKC.

Expressed in neurons and intestine.

It localises to the cytoplasm. It is found in the nucleus. The protein is LIM domain-containing protein pin-2 (pin-2) of Caenorhabditis elegans.